The sequence spans 115 residues: Large ribosomal subunit protein uL23 (115 aa).

This sequence belongs to the universal ribosomal protein uL23 family. Part of the 50S ribosomal subunit. Contacts protein L29, and trigger factor when it is bound to the ribosome.

Its function is as follows. One of the early assembly proteins it binds 23S rRNA. One of the proteins that surrounds the polypeptide exit tunnel on the outside of the ribosome. Forms the main docking site for trigger factor binding to the ribosome. This chain is Large ribosomal subunit protein uL23, found in Granulibacter bethesdensis (strain ATCC BAA-1260 / CGDNIH1).